Consider the following 223-residue polypeptide: Phosphoribosylformylglycinamidine synthase subunit PurQ (223 aa).

Residues 4 to 223 (FAVVVFPGTN…FKGMVEWVRS (220 aa)) enclose the Glutamine amidotransferase type-1 domain. Residue C85 is the Nucleophile of the active site. Catalysis depends on residues H196 and E198.

In terms of assembly, part of the FGAM synthase complex composed of 1 PurL, 1 PurQ and 2 PurS subunits.

It is found in the cytoplasm. The catalysed reaction is N(2)-formyl-N(1)-(5-phospho-beta-D-ribosyl)glycinamide + L-glutamine + ATP + H2O = 2-formamido-N(1)-(5-O-phospho-beta-D-ribosyl)acetamidine + L-glutamate + ADP + phosphate + H(+). The enzyme catalyses L-glutamine + H2O = L-glutamate + NH4(+). Its pathway is purine metabolism; IMP biosynthesis via de novo pathway; 5-amino-1-(5-phospho-D-ribosyl)imidazole from N(2)-formyl-N(1)-(5-phospho-D-ribosyl)glycinamide: step 1/2. Functionally, part of the phosphoribosylformylglycinamidine synthase complex involved in the purines biosynthetic pathway. Catalyzes the ATP-dependent conversion of formylglycinamide ribonucleotide (FGAR) and glutamine to yield formylglycinamidine ribonucleotide (FGAM) and glutamate. The FGAM synthase complex is composed of three subunits. PurQ produces an ammonia molecule by converting glutamine to glutamate. PurL transfers the ammonia molecule to FGAR to form FGAM in an ATP-dependent manner. PurS interacts with PurQ and PurL and is thought to assist in the transfer of the ammonia molecule from PurQ to PurL. The polypeptide is Phosphoribosylformylglycinamidine synthase subunit PurQ (Pyrococcus furiosus (strain ATCC 43587 / DSM 3638 / JCM 8422 / Vc1)).